Reading from the N-terminus, the 181-residue chain is Adenine phosphoribosyltransferase (181 aa).

The protein belongs to the purine/pyrimidine phosphoribosyltransferase family. As to quaternary structure, homodimer.

It is found in the cytoplasm. The enzyme catalyses AMP + diphosphate = 5-phospho-alpha-D-ribose 1-diphosphate + adenine. It functions in the pathway purine metabolism; AMP biosynthesis via salvage pathway; AMP from adenine: step 1/1. In terms of biological role, catalyzes a salvage reaction resulting in the formation of AMP, that is energically less costly than de novo synthesis. The protein is Adenine phosphoribosyltransferase of Vibrio vulnificus (strain CMCP6).